We begin with the raw amino-acid sequence, 300 residues long: Probable endonuclease 4 (300 aa).

Residues histidine 68, histidine 109, glutamate 144, aspartate 178, histidine 181, histidine 213, aspartate 226, histidine 228, and glutamate 258 each coordinate Zn(2+).

This sequence belongs to the AP endonuclease 2 family. It depends on Zn(2+) as a cofactor.

The catalysed reaction is Endonucleolytic cleavage to 5'-phosphooligonucleotide end-products.. Functionally, endonuclease IV plays a role in DNA repair. It cleaves phosphodiester bonds at apurinic or apyrimidinic (AP) sites, generating a 3'-hydroxyl group and a 5'-terminal sugar phosphate. This chain is Probable endonuclease 4, found in Latilactobacillus sakei subsp. sakei (strain 23K) (Lactobacillus sakei subsp. sakei).